Reading from the N-terminus, the 525-residue chain is MQLTGEMLIGAEAVAGSAGTLRAFDPSKGEPIDAPVFGVAAQADVERACELARDAFDAYRAQPLAARAAFLEAIADEIVALGDALIERAHAETGLPVARLQGERGRTVGQLRLFARVVRDGRFLAASIDPAQPARTPLPRSDLRLQKVGLGPVVVFGASNFPLAFSVAGGDTASALAAGCPVIVKAHEAHLGTSELVGRAIRAAVAKTGMPAGVFSLLVGPGRVIGGALVSHPAVQAVGFTGSRQGGMALVQIANARPQPIPVYAEMSSINPVVLFPAALAARGDAIATGFVDSLTLGVGQFCTNPGLVLAIDGPDLDRFETVAAQALAKKPAGVMLTQGIADAYRNGRGKLAELPGVREIGAGEAAQTDCQAGGALYEVGAQAFLAEPAFSHEVFGPASLIVRCRDLDEVARVLEALEGQLTATLQMDADDKPLARRLLPVLERKAGRLLVNGYPTGVEVCDAMVHGGPFPATSNPAVTSVGATAIERFLRPVCYQDFPDDLLPEGLQESNPLAIPRLRDGKAE.

NAD(+)-binding positions include K185, E188, and G242 to G247. The active-site Proton acceptor is E266. C303 (nucleophile) is an active-site residue. An NAD(+)-binding site is contributed by E394.

This sequence belongs to the aldehyde dehydrogenase family. Homodimer.

The catalysed reaction is 2,5-dioxopentanoate + NADP(+) + H2O = 2-oxoglutarate + NADPH + 2 H(+). It carries out the reaction 2,5-dioxopentanoate + NAD(+) + H2O = 2-oxoglutarate + NADH + 2 H(+). Its pathway is carbohydrate acid metabolism; D-glucarate degradation. The protein operates within carbohydrate acid metabolism; galactarate degradation. Functionally, catalyzes the NAD(P)(+)-dependent oxidation of alpha-ketoglutaric semialdehyde (alphaKGSA) to alpha-ketoglutarate. Involved in D-glucarate/D-galactarate metabolism. Prefers NAD(+) to NADP(+) as a cosubstrate. The protein is Alpha-ketoglutaric semialdehyde dehydrogenase 2 of Azospirillum brasilense.